The chain runs to 596 residues: (E)-beta-ocimene synthase, chloroplastic (596 aa).

A chloroplast-targeting transit peptide spans 1–35 (MAITHYQMASFQSSFHFCMLRKTLRQKSSLHFAKR). (2E)-geranyl diphosphate contacts are provided by arginine 307, aspartate 344, aspartate 348, arginine 485, and asparagine 488. Mg(2+)-binding residues include aspartate 344 and aspartate 348. Positions 344–348 (DDIYD) match the DDXXD motif motif. Mg(2+) contacts are provided by asparagine 488, alanine 492, and glutamate 496.

Belongs to the terpene synthase family. Tpsb subfamily. Mg(2+) serves as cofactor. The cofactor is Mn(2+). As to expression, highly expressed in leaves, stems and disk florets. Detected in roots.

The protein resides in the plastid. Its subcellular location is the chloroplast. The enzyme catalyses (2E)-geranyl diphosphate = (E)-beta-ocimene + diphosphate. It functions in the pathway secondary metabolite biosynthesis; terpenoid biosynthesis. Its function is as follows. Monoterpene synthase involved in the biosynthesis of (E)-beta-ocimene as the major product and trace amounts of (Z)-beta-ocimene. Can only accept geranyl diphosphate as substrate. This is (E)-beta-ocimene synthase, chloroplastic from Matricaria chamomilla var. recutita (German chamomile).